The sequence spans 393 residues: S-adenosylmethionine synthase (393 aa).

His16 provides a ligand contact to ATP. Mg(2+) is bound at residue Asp18. Glu44 is a binding site for K(+). L-methionine is bound by residues Glu57 and Gln100. A flexible loop region spans residues 100–110; it reads QSNDIAQGVDH. ATP is bound by residues 167–169, 238–239, Asp247, 253–254, Ala270, and Lys274; these read DAK, RF, and RK. An L-methionine-binding site is contributed by Asp247. Position 278 (Lys278) interacts with L-methionine.

The protein belongs to the AdoMet synthase family. As to quaternary structure, homotetramer; dimer of dimers. It depends on Mg(2+) as a cofactor. K(+) is required as a cofactor.

The protein resides in the cytoplasm. It carries out the reaction L-methionine + ATP + H2O = S-adenosyl-L-methionine + phosphate + diphosphate. The protein operates within amino-acid biosynthesis; S-adenosyl-L-methionine biosynthesis; S-adenosyl-L-methionine from L-methionine: step 1/1. Functionally, catalyzes the formation of S-adenosylmethionine (AdoMet) from methionine and ATP. The overall synthetic reaction is composed of two sequential steps, AdoMet formation and the subsequent tripolyphosphate hydrolysis which occurs prior to release of AdoMet from the enzyme. The sequence is that of S-adenosylmethionine synthase from Albidiferax ferrireducens (strain ATCC BAA-621 / DSM 15236 / T118) (Rhodoferax ferrireducens).